A 425-amino-acid polypeptide reads, in one-letter code: Type II secretion system protein L (425 aa).

Over 1–273 (MKIAGKWKRK…DKAWQNTLLP (273 aa)) the chain is Cytoplasmic. A helical transmembrane segment spans residues 274 to 290 (WRGVGIAFACYLLLVVA). Topologically, residues 291–425 (DAGWAHYQLY…EGRLTLRSQQ (135 aa)) are periplasmic.

The protein belongs to the GSP L family. As to quaternary structure, type II secretion system is composed of four main components: the outer membrane complex, the inner membrane complex, the cytoplasmic secretion ATPase and the periplasm-spanning pseudopilus. Forms homodimers. Interacts with OutM/GspM. Interacts with OutE/GspE and OutF/GspF.

It localises to the cell inner membrane. Functionally, inner membrane component of the type II secretion system required for the energy-dependent secretion of extracellular factors such as proteases and toxins from the periplasm. Plays a role in the complex assembly and recruits OutM resulting in a stable complex in the inner membrane. Provides thus a link between the energy-providing OutE protein in the cytoplasm and the rest of the T2SS machinery. In Pectobacterium carotovorum subsp. carotovorum (Erwinia carotovora subsp. carotovora), this protein is Type II secretion system protein L (outL).